A 780-amino-acid polypeptide reads, in one-letter code: Protein SAV (780 aa).

ATP-binding positions include 253 to 260 and 528 to 535; these read GPPGTGKT.

This sequence belongs to the AAA ATPase family. CDC48 subfamily.

Its function is as follows. Not yet known, shows ATPase activity. This Sulfolobus acidocaldarius (strain ATCC 33909 / DSM 639 / JCM 8929 / NBRC 15157 / NCIMB 11770) protein is Protein SAV (sav).